The chain runs to 296 residues: Peptide transport system permease protein SapC (296 aa).

Residues 1 to 28 (MPYDSVYSEKRPPGTLRTAWRKFYSDAP) lie on the Cytoplasmic side of the membrane. A helical membrane pass occupies residues 29–49 (AMVGLYGCAGLALLCIFGGWI). The Periplasmic segment spans residues 50-98 (APYGIDQQFLGYQLLPPSWSRYGEVSFFLGTDDLGRDVLSRLLSGAAPT). A helical transmembrane segment spans residues 99–119 (VGGAFIVTLAATLCGLVLGVV). One can recognise an ABC transmembrane type-1 domain in the interval 99–284 (VGGAFIVTLA…LSVLLVNLLG (186 aa)). Residues 120–133 (AGATHGLRSAVLNH) lie on the Cytoplasmic side of the membrane. Residues 134–154 (ILDTLLSIPSLLLAIIVVAFA) form a helical membrane-spanning segment. Residues 155-196 (GPHLSHAMFAVWLALLPRMVRSVYSMVHDELEKEYVIAARLD) lie on the Periplasmic side of the membrane. The helical transmembrane segment at 197 to 217 (GATTLNILWFAILPNITAGLV) threads the bilayer. The Cytoplasmic segment spans residues 218 to 222 (TEITR). The helical transmembrane segment at 223-243 (ALSMAILDIAALGFLDLGAQL) threads the bilayer. The Periplasmic portion of the chain corresponds to 244–257 (PSPEWGAMLGDALE). A helical transmembrane segment spans residues 258–278 (LIYVAPWTVMLPGAAITLSVL). At 279–296 (LVNLLGDGIRRAIIAGVE) the chain is on the cytoplasmic side.

Belongs to the binding-protein-dependent transport system permease family. OppBC subfamily.

Its subcellular location is the cell inner membrane. Its function is as follows. Involved in a peptide intake transport system that plays a role in the resistance to antimicrobial peptides. This chain is Peptide transport system permease protein SapC (sapC), found in Salmonella typhi.